Reading from the N-terminus, the 943-residue chain is Isoleucine--tRNA ligase (943 aa).

The 'HIGH' region motif lies at 58–68 (PYANGKIHIGH). L-isoleucyl-5'-AMP is bound at residue Glu567. Residues 608–612 (KMSKS) carry the 'KMSKS' region motif. Lys611 contacts ATP. Zn(2+)-binding residues include Cys906, Cys909, Cys926, and Cys929.

Belongs to the class-I aminoacyl-tRNA synthetase family. IleS type 1 subfamily. Monomer. Zn(2+) serves as cofactor.

It localises to the cytoplasm. The catalysed reaction is tRNA(Ile) + L-isoleucine + ATP = L-isoleucyl-tRNA(Ile) + AMP + diphosphate. Catalyzes the attachment of isoleucine to tRNA(Ile). As IleRS can inadvertently accommodate and process structurally similar amino acids such as valine, to avoid such errors it has two additional distinct tRNA(Ile)-dependent editing activities. One activity is designated as 'pretransfer' editing and involves the hydrolysis of activated Val-AMP. The other activity is designated 'posttransfer' editing and involves deacylation of mischarged Val-tRNA(Ile). This chain is Isoleucine--tRNA ligase, found in Pseudomonas putida (strain GB-1).